The chain runs to 233 residues: Large ribosomal subunit protein uL1 (233 aa).

This sequence belongs to the universal ribosomal protein uL1 family. As to quaternary structure, part of the 50S ribosomal subunit.

In terms of biological role, binds directly to 23S rRNA. The L1 stalk is quite mobile in the ribosome, and is involved in E site tRNA release. Its function is as follows. Protein L1 is also a translational repressor protein, it controls the translation of the L11 operon by binding to its mRNA. The polypeptide is Large ribosomal subunit protein uL1 (Shewanella sp. (strain ANA-3)).